The following is a 359-amino-acid chain: DNA ligase (359 aa).

ATP contacts are provided by residues 32 to 35 (EIKY), Arg-39, 55 to 57 (RVS), and Glu-93. Residue Lys-34 is the N6-AMP-lysine intermediate of the active site. An a divalent metal cation-binding site is contributed by Glu-217. Positions 232 and 238 each coordinate ATP.

Belongs to the ATP-dependent DNA ligase family. A divalent metal cation serves as cofactor.

The catalysed reaction is ATP + (deoxyribonucleotide)n-3'-hydroxyl + 5'-phospho-(deoxyribonucleotide)m = (deoxyribonucleotide)n+m + AMP + diphosphate.. DNA ligase that seals nicks in double-stranded DNA during DNA replication, DNA recombination and DNA repair in an ATP-dependent reaction. Binds specifically to DNA nicks containing a 3'-OH and a 5'-phosphate group. The polypeptide is DNA ligase (Escherichia phage T7 (Bacteriophage T7)).